A 330-amino-acid chain; its full sequence is MAQPSARVLQSGMRLPPMPTIRELVKLYRLQARKQLSQNFLMDERLTDKIVKSAGRIDPRDLVLEVGPGPGGITRSILRRHPQRLLLVEKDPRFGETLQLLKECASPLNIQFDIHYDDILRFNIEQHIPDTSQRIHLIGNLPFAISTRLLINWLDDLAARRGAFRRIDTCMTLTFQQEVAERICAPVGGEQRCRLSVMSQVWTEPVMKFTIPGKAFVPKPQVDVGVVKLIPLKRPKTQLPFHLVERVVRHIFSMRQKYCRRGYGTLLPPEDREEVAEKLFQRAEVQDTLRPFELTVEQCLRLAEVYSEHLVTRPEVAAYDYRAPKNVEVL.

A mitochondrion-targeting transit peptide spans 1 to 84; the sequence is MAQPSARVLQ…RSILRRHPQR (84 aa). Residues 38–41, asparagine 39, leucine 41, glycine 67, glutamate 89, aspartate 118, and asparagine 140 contribute to the S-adenosyl-L-methionine site; that span reads QNFL.

It belongs to the class I-like SAM-binding methyltransferase superfamily. rRNA adenine N(6)-methyltransferase family. KsgA subfamily.

It is found in the mitochondrion. Its function is as follows. Probable S-adenosyl-L-methionine-dependent methyltransferase which specifically dimethylates mitochondrial 12S rRNA at the conserved stem loop. In contrast to mtTFB2, it does not have a critical role in either transcription or regulation of the copy number of mitochondrial DNA. The sequence is that of Dimethyladenosine transferase 1, mitochondrial (mtTFB1) from Drosophila melanogaster (Fruit fly).